The primary structure comprises 72 residues: Translation initiation factor IF-1 2 (72 aa).

An S1-like domain is found at 1-72 (MAKDDVIQMQ…SRARIVFRTK (72 aa)).

It belongs to the IF-1 family. As to quaternary structure, component of the 30S ribosomal translation pre-initiation complex which assembles on the 30S ribosome in the order IF-2 and IF-3, IF-1 and N-formylmethionyl-tRNA(fMet); mRNA recruitment can occur at any time during PIC assembly.

The protein resides in the cytoplasm. In terms of biological role, one of the essential components for the initiation of protein synthesis. Stabilizes the binding of IF-2 and IF-3 on the 30S subunit to which N-formylmethionyl-tRNA(fMet) subsequently binds. Helps modulate mRNA selection, yielding the 30S pre-initiation complex (PIC). Upon addition of the 50S ribosomal subunit IF-1, IF-2 and IF-3 are released leaving the mature 70S translation initiation complex. The sequence is that of Translation initiation factor IF-1 2 from Cupriavidus metallidurans (strain ATCC 43123 / DSM 2839 / NBRC 102507 / CH34) (Ralstonia metallidurans).